We begin with the raw amino-acid sequence, 208 residues long: Probable GTP-binding protein EngB (208 aa).

Residues 23–205 (LTSEMVVLGR…RQTLLKHLLT (183 aa)) form the EngB-type G domain. Residues 31–38 (GRSNVGKS), 57–61 (GKTRL), 84–87 (DLPG), 154–157 (TKFD), and 182–184 (FNA) each bind GTP. The Mg(2+) site is built by Ser-38 and Thr-59.

Belongs to the TRAFAC class TrmE-Era-EngA-EngB-Septin-like GTPase superfamily. EngB GTPase family. It depends on Mg(2+) as a cofactor.

Necessary for normal cell division and for the maintenance of normal septation. This chain is Probable GTP-binding protein EngB, found in Helicobacter pylori (strain ATCC 700392 / 26695) (Campylobacter pylori).